The following is a 150-amino-acid chain: Large ribosomal subunit protein bL9 (150 aa).

This sequence belongs to the bacterial ribosomal protein bL9 family.

Binds to the 23S rRNA. The sequence is that of Large ribosomal subunit protein bL9 from Enterococcus faecalis (strain ATCC 700802 / V583).